Consider the following 827-residue polypeptide: SID1 transmembrane family member 1 (827 aa).

A signal peptide spans 1–19 (MLDCLRLALLCALPWLLRA). Residues 20–309 (AVPGHQEEPL…SIKESVYVKS (290 aa)) lie on the Extracellular side of the membrane. N-linked (GlcNAc...) asparagine glycans are attached at residues asparagine 67, asparagine 83, asparagine 136, and asparagine 282. A helical transmembrane segment spans residues 310–330 (SLFSIFVFLSFYLGCLLVVLV). The Cytoplasmic portion of the chain corresponds to 331-442 (HHVRFQRKSI…DRRIVSKKYK (112 aa)). Residues 344 to 409 (FGSSDGSGNM…VEESDFDTMP (66 aa)) are disordered. Low complexity predominate over residues 375–386 (SSSSPGRQMSSS). The segment covering 398-409 (SSVEESDFDTMP) has biased composition (acidic residues). The chain crosses the membrane as a helical span at residues 443-463 (IYFWNIITIAVFYALPVMQLV). The Extracellular portion of the chain corresponds to 464–494 (ITYQTVVNVTGNQDICYYNFLCAHPLGVLSA). Asparagine 471 carries N-linked (GlcNAc...) asparagine glycosylation. The chain crosses the membrane as a helical span at residues 495 to 515 (FNNILSNLGHVLLGFLFLLIV). Residues 516–541 (LRRDLLHRRALEAKDIFAMEYGIPKH) are Cytoplasmic-facing. A helical membrane pass occupies residues 542–562 (FGLFYAMGIALMMEGVLSACY). Over 563 to 572 (HVCPNYSNFQ) the chain is Extracellular. Asparagine 567 is a glycosylation site (N-linked (GlcNAc...) asparagine). A helical transmembrane segment spans residues 573–590 (FDTSFMYMIAGLCMLKLY). The Cytoplasmic segment spans residues 591–600 (QTRHPDINAS). The chain crosses the membrane as a helical span at residues 601–621 (AYSAYASFAVVITLTVLGVVF). Topologically, residues 622–626 (GKNDV) are extracellular. The chain crosses the membrane as a helical span at residues 627-647 (WFWIIFSAIHILSSLALSTQI). Topologically, residues 648–683 (YYMGRFKIDLGIFRRAAMVFYTDCIQQCSRPLYMDR) are cytoplasmic. Residues 684–704 (MVLLIVGNLVNWSFAFFGLIY) form a helical membrane-spanning segment. The Extracellular portion of the chain corresponds to 705-710 (RPRDFA). The chain crosses the membrane as a helical span at residues 711 to 731 (SYMLGIFICNLLLYLAFYIIM). The Cytoplasmic segment spans residues 732–741 (KLRSSEKVLP). The helical transmembrane segment at 742–762 (LPVFCIAATAVVWAAALYFFF) threads the bilayer. At 763-791 (QNLSSWEGTPAESREKNRECVLLDFFDDH) the chain is on the extracellular side. Asparagine 764 carries N-linked (GlcNAc...) asparagine glycosylation. The chain crosses the membrane as a helical span at residues 792–812 (DIWHFLSATALFFSFLVLLTL). The Cytoplasmic segment spans residues 813-827 (DDDLDVVRRDQIPVF).

It belongs to the SID1 family.

It is found in the membrane. Functionally, in vitro binds long double-stranded RNA (dsRNA) (500 and 700 base pairs), but not dsRNA shorter than 300 bp. Not involved in RNA autophagy, a process in which RNA is directly imported into lysosomes in an ATP-dependent manner, and degraded. The protein is SID1 transmembrane family member 1 (Sidt1) of Mus musculus (Mouse).